Consider the following 420-residue polypeptide: L-rhamnose isomerase (420 aa).

The Mn(2+) site is built by H264, D296, and D298.

Belongs to the rhamnose isomerase family. It depends on Mn(2+) as a cofactor.

The protein localises to the cytoplasm. It catalyses the reaction L-rhamnopyranose = L-rhamnulose. It functions in the pathway carbohydrate degradation; L-rhamnose degradation; glycerone phosphate from L-rhamnose: step 1/3. Its function is as follows. Catalyzes the interconversion of L-rhamnose and L-rhamnulose. This chain is L-rhamnose isomerase, found in Listeria monocytogenes serotype 4b (strain CLIP80459).